The primary structure comprises 311 residues: Probable 5-dehydro-4-deoxyglucarate dehydratase (311 aa).

This sequence belongs to the DapA family.

It catalyses the reaction 5-dehydro-4-deoxy-D-glucarate + H(+) = 2,5-dioxopentanoate + CO2 + H2O. Its pathway is carbohydrate acid metabolism; D-glucarate degradation; 2,5-dioxopentanoate from D-glucarate: step 2/2. The polypeptide is Probable 5-dehydro-4-deoxyglucarate dehydratase (Ralstonia nicotianae (strain ATCC BAA-1114 / GMI1000) (Ralstonia solanacearum)).